The primary structure comprises 367 residues: DNA replication and repair protein RecF (367 aa).

Position 30 to 37 (30 to 37 (GANGSGKT)) interacts with ATP.

Belongs to the RecF family.

It localises to the cytoplasm. In terms of biological role, the RecF protein is involved in DNA metabolism; it is required for DNA replication and normal SOS inducibility. RecF binds preferentially to single-stranded, linear DNA. It also seems to bind ATP. In Pseudomonas putida (strain GB-1), this protein is DNA replication and repair protein RecF.